A 336-amino-acid chain; its full sequence is MARRRSQRVCASGPSMLNSARGAPELLRGTATNAEVSAAAAGATGSEELPPGDRGCRNGGGRGPAATTSSTGVAVGAEHGEDSLSRKPDPEPGRMDHHQPGTGRYQVLLNEEDNSESSAIEQPPTSNPAPQIVQAASSAPALETDSSPPPYSSITVEVPTTSDTEVYGEFYPVPPPYSVATSLPTYDEAEKAKAAAMAAAAAETSQRIQEEECPPRDDFSDADQLRVGNDGIFMLAFFMAFIFNWLGFCLSFCITNTIAGRYGAICGFGLSLIKWILIVRFSDYFTGYFNGQYWLWWIFLVLGLLLFFRGFVNYLKVRNMSESMAAAHRTRYFFLL.

Disordered stretches follow at residues 1-24 and 37-156; these read MARR…RGAP and SAAA…SITV. Residues 1 to 231 are Cytoplasmic-facing; the sequence is MARRRSQRVC…ADQLRVGNDG (231 aa). Positions 37 to 48 are enriched in low complexity; that stretch reads SAAAAGATGSEE. Over residues 78 to 99 the composition is skewed to basic and acidic residues; that stretch reads EHGEDSLSRKPDPEPGRMDHHQ. The segment at 148-151 is interaction with NEDD4; it reads PPPY. A PPxY motif 1 motif is present at residues 148–151; that stretch reads PPPY. Phosphotyrosine; by SRC is present on residues Tyr-151, Tyr-167, Tyr-171, and Tyr-177. 2 consecutive short sequence motifs (PPxY motif) follow at residues 174–177 and 184–186; these read PPPY and PTY. A helical membrane pass occupies residues 232–252; the sequence is IFMLAFFMAFIFNWLGFCLSF. Residues 253 to 257 lie on the Extracellular side of the membrane; it reads CITNT. A helical membrane pass occupies residues 258–278; the sequence is IAGRYGAICGFGLSLIKWILI. Residues 279 to 287 are Cytoplasmic-facing; sequence VRFSDYFTG. The chain crosses the membrane as a helical span at residues 288-308; it reads YFNGQYWLWWIFLVLGLLLFF. Residues 309 to 336 are Extracellular-facing; it reads RGFVNYLKVRNMSESMAAAHRTRYFFLL.

Forms heterodimers with NDFIP1. Interacts with HECT domain-containing E3 ubiquitin-protein ligases, including NEDD4. Interacts with NEDD4L. Interacts with PTEN. When phosphorylated at Tyr-167, interacts with SRC and LYN SH2 domain. May thus act as a scaffold that recruits SRC to NDFIP1, enhancing NDFIP1 phosphorylation. Interacts with SLC11A2/DMT1. May interact with phosphorylated EGFR. Interacts with KCNH2. Post-translationally, ubiquitinated by NEDD4 and ITCH. Also ubiquitinated by NEDD4L. Ubiquitination by NEDD4 or NEDD4L does not affect turnover. In terms of processing, undergoes transient tyrosine-phosphorylation following EGF stimulation, most probably catalyzed by SRC. Phosphorylation on Tyr-151, Tyr-171 and Tyr-177 are dependent on the phosphorylation on Tyr-167. Also phosphorylated by LYN and FYN. As to expression, expressed in brain, lung, heart, skeletal muscle, kidney, liver and placenta.

The protein localises to the endosome membrane. The protein resides in the golgi apparatus membrane. It localises to the endosome. Its subcellular location is the multivesicular body membrane. Functionally, activates HECT domain-containing E3 ubiquitin-protein ligases, including ITCH, NEDD4, NEDD4L, SMURF2, WWP1 and WWP2, and consequently modulates the stability of their targets. As a result, may control many cellular processes. Recruits ITCH, NEDD4 and SMURF2 to endosomal membranes. Negatively regulates KCNH2 potassium channel activity by decreasing its cell-surface expression and interfering with channel maturation through recruitment of NEDD4L to the Golgi apparatus and multivesicular body where it mediates KCNH2 degradation. May modulate EGFR signaling. Together with NDFIP1, limits the cytokine signaling and expansion of effector Th2 T-cells by promoting degradation of JAK1, probably by ITCH- and NEDD4L-mediated ubiquitination. The chain is NEDD4 family-interacting protein 2 (NDFIP2) from Homo sapiens (Human).